We begin with the raw amino-acid sequence, 520 residues long: Cysteine--tRNA ligase (520 aa).

Zn(2+) is bound at residue Cys-29. A 'HIGH' region motif is present at residues 31 to 41; sequence PTVYNYPHLGN. Residues Cys-227, His-252, and Glu-256 each contribute to the Zn(2+) site. Residues 301–305 carry the 'KMSKS' region motif; that stretch reads KMSKS. An ATP-binding site is contributed by Lys-304.

The protein belongs to the class-I aminoacyl-tRNA synthetase family. Monomer. It depends on Zn(2+) as a cofactor.

The protein resides in the cytoplasm. The catalysed reaction is tRNA(Cys) + L-cysteine + ATP = L-cysteinyl-tRNA(Cys) + AMP + diphosphate. In Treponema pallidum (strain Nichols), this protein is Cysteine--tRNA ligase (cysS).